The chain runs to 243 residues: Small ribosomal subunit protein eS4 (243 aa).

Residues 43–105 enclose the S4 RNA-binding domain; the sequence is IPLLYIVRDY…TGEHYRVLPN (63 aa).

This sequence belongs to the eukaryotic ribosomal protein eS4 family. As to quaternary structure, part of the 30S ribosomal subunit.

The polypeptide is Small ribosomal subunit protein eS4 (Pyrococcus furiosus (strain ATCC 43587 / DSM 3638 / JCM 8422 / Vc1)).